Reading from the N-terminus, the 381-residue chain is L-lactate dehydrogenase (381 aa).

The FMN hydroxy acid dehydrogenase domain occupies 1-380 (MIISSASDYR…KPEALVDLSK (380 aa)). Tyr24 is a binding site for substrate. 2 residues coordinate FMN: Ser106 and Gln127. Residue Tyr129 participates in substrate binding. Residue Thr155 participates in FMN binding. A substrate-binding site is contributed by Arg164. Residue Lys251 participates in FMN binding. His275 functions as the Proton acceptor in the catalytic mechanism. Arg278 provides a ligand contact to substrate. 306–330 (DSGIRNGLDIVRMLALGADATMLGR) contacts FMN.

Belongs to the FMN-dependent alpha-hydroxy acid dehydrogenase family. FMN serves as cofactor.

The protein resides in the cell inner membrane. It carries out the reaction (S)-lactate + A = pyruvate + AH2. In terms of biological role, catalyzes the conversion of L-lactate to pyruvate. Is coupled to the respiratory chain. This Haemophilus influenzae (strain PittEE) protein is L-lactate dehydrogenase.